The following is a 206-amino-acid chain: Large ribosomal subunit protein uL4 (206 aa).

The disordered stretch occupies residues 47-75 (GTQSAKTRAEVSGGGIKPWRQKGTGRARQ).

The protein belongs to the universal ribosomal protein uL4 family. In terms of assembly, part of the 50S ribosomal subunit.

Its function is as follows. One of the primary rRNA binding proteins, this protein initially binds near the 5'-end of the 23S rRNA. It is important during the early stages of 50S assembly. It makes multiple contacts with different domains of the 23S rRNA in the assembled 50S subunit and ribosome. In terms of biological role, forms part of the polypeptide exit tunnel. This chain is Large ribosomal subunit protein uL4, found in Clostridium botulinum (strain ATCC 19397 / Type A).